A 1378-amino-acid polypeptide reads, in one-letter code: DNA-directed RNA polymerase subunit beta (1378 aa).

Belongs to the RNA polymerase beta chain family. As to quaternary structure, the RNAP catalytic core consists of 2 alpha, 1 beta, 1 beta' and 1 omega subunit. When a sigma factor is associated with the core the holoenzyme is formed, which can initiate transcription.

The enzyme catalyses RNA(n) + a ribonucleoside 5'-triphosphate = RNA(n+1) + diphosphate. DNA-dependent RNA polymerase catalyzes the transcription of DNA into RNA using the four ribonucleoside triphosphates as substrates. The chain is DNA-directed RNA polymerase subunit beta from Dinoroseobacter shibae (strain DSM 16493 / NCIMB 14021 / DFL 12).